The primary structure comprises 265 residues: 4-hydroxy-tetrahydrodipicolinate reductase (265 aa).

NAD(+) contacts are provided by residues 7 to 12 (GASGRM), aspartate 33, 96 to 98 (GTT), and 120 to 123 (AANF). The active-site Proton donor/acceptor is histidine 153. Histidine 154 lines the (S)-2,3,4,5-tetrahydrodipicolinate pocket. The active-site Proton donor is lysine 157. Residue 163-164 (GT) coordinates (S)-2,3,4,5-tetrahydrodipicolinate.

The protein belongs to the DapB family.

It localises to the cytoplasm. It catalyses the reaction (S)-2,3,4,5-tetrahydrodipicolinate + NAD(+) + H2O = (2S,4S)-4-hydroxy-2,3,4,5-tetrahydrodipicolinate + NADH + H(+). The catalysed reaction is (S)-2,3,4,5-tetrahydrodipicolinate + NADP(+) + H2O = (2S,4S)-4-hydroxy-2,3,4,5-tetrahydrodipicolinate + NADPH + H(+). The protein operates within amino-acid biosynthesis; L-lysine biosynthesis via DAP pathway; (S)-tetrahydrodipicolinate from L-aspartate: step 4/4. In terms of biological role, catalyzes the conversion of 4-hydroxy-tetrahydrodipicolinate (HTPA) to tetrahydrodipicolinate. The protein is 4-hydroxy-tetrahydrodipicolinate reductase of Cupriavidus taiwanensis (strain DSM 17343 / BCRC 17206 / CCUG 44338 / CIP 107171 / LMG 19424 / R1) (Ralstonia taiwanensis (strain LMG 19424)).